Here is a 246-residue protein sequence, read N- to C-terminus: MTKRSWNIRLEDMVAARVHLGHDIKKRNPRMAPYISAKLKDTDITNLKKTARFLSETCDLVFEAASKGKKFLIVGTKKEVANSVAQAARTAGCHYVNQKWLGGMLTNWSTTKKRLHKFRDLIRQQGRLNRLPKRDAAILKRQLFHLQKSLGGVKYMKELPDIVIILDQHGEFTALRECISLRIPTIGLIDTNCDPDLVDLPIPANDDSIPSIRFILNKLILAICKGRSRRTITSRPSHIKKKEKNR.

Belongs to the universal ribosomal protein uS2 family.

It localises to the plastid. It is found in the chloroplast. The sequence is that of Small ribosomal subunit protein uS2c (rps2) from Pelargonium hortorum (Common geranium).